A 708-amino-acid chain; its full sequence is Polyribonucleotide nucleotidyltransferase (708 aa).

Mg(2+) is bound by residues Asp488 and Asp494. The region spanning 555-615 is the KH domain; it reads PIIKVTKVDP…ENVDKAIELI (61 aa). The S1 motif domain maps to 625–692; that stretch reads GEVLEGKVTR…DLGRLQFKRV (68 aa).

It belongs to the polyribonucleotide nucleotidyltransferase family. Mg(2+) serves as cofactor.

The protein resides in the cytoplasm. The catalysed reaction is RNA(n+1) + phosphate = RNA(n) + a ribonucleoside 5'-diphosphate. In terms of biological role, involved in mRNA degradation. Catalyzes the phosphorolysis of single-stranded polyribonucleotides processively in the 3'- to 5'-direction. This Thermotoga sp. (strain RQ2) protein is Polyribonucleotide nucleotidyltransferase.